The primary structure comprises 225 residues: Ribose-5-phosphate isomerase A (225 aa).

Substrate contacts are provided by residues 26-29 (TGST), 82-85 (DGAD), and 95-98 (KGGG). Glutamate 104 (proton acceptor) is an active-site residue. Lysine 122 is a binding site for substrate.

Belongs to the ribose 5-phosphate isomerase family. In terms of assembly, homodimer.

The catalysed reaction is aldehydo-D-ribose 5-phosphate = D-ribulose 5-phosphate. It functions in the pathway carbohydrate degradation; pentose phosphate pathway; D-ribose 5-phosphate from D-ribulose 5-phosphate (non-oxidative stage): step 1/1. Catalyzes the reversible conversion of ribose-5-phosphate to ribulose 5-phosphate. This is Ribose-5-phosphate isomerase A from Streptococcus sanguinis (strain SK36).